Here is a 276-residue protein sequence, read N- to C-terminus: Large ribosomal subunit protein uL2 (276 aa).

The segment at Thr-219–Lys-276 is disordered.

Belongs to the universal ribosomal protein uL2 family. In terms of assembly, part of the 50S ribosomal subunit. Forms a bridge to the 30S subunit in the 70S ribosome.

Its function is as follows. One of the primary rRNA binding proteins. Required for association of the 30S and 50S subunits to form the 70S ribosome, for tRNA binding and peptide bond formation. It has been suggested to have peptidyltransferase activity; this is somewhat controversial. Makes several contacts with the 16S rRNA in the 70S ribosome. The chain is Large ribosomal subunit protein uL2 from Alkaliphilus oremlandii (strain OhILAs) (Clostridium oremlandii (strain OhILAs)).